The primary structure comprises 346 residues: Heparan sulfate glucosamine 3-O-sulfotransferase 5 (346 aa).

At 1–12 (MLFKQQAWLRQK) the chain is on the cytoplasmic side. The helical; Signal-anchor for type II membrane protein transmembrane segment at 13-32 (LLVLGSLAVGSLLYLVARVG) threads the bilayer. The Lumenal segment spans residues 33 to 346 (SLDRLQPICP…QITGRTLNWP (314 aa)). 100-104 (KGGTR) is a 3'-phosphoadenylyl sulfate binding site. Substrate is bound by residues 122-128 (EIHFFDN) and 155-158 (KSPA). Residues R183 and S191 each contribute to the 3'-phosphoadenylyl sulfate site. Substrate is bound at residue 226–227 (YK). A glycan (N-linked (GlcNAc...) asparagine) is linked at N287. Y293 contacts 3'-phosphoadenylyl sulfate. A disulfide bridge links C294 with C304. 3'-phosphoadenylyl sulfate is bound at residue 309–313 (KGRIH).

It belongs to the sulfotransferase 1 family. In terms of tissue distribution, highly expressed in skeletal muscle and fetal brain, and also found in adult brain, spinal cord, cerebellum and colon.

It localises to the golgi apparatus membrane. The enzyme catalyses alpha-D-glucosaminyl-[heparan sulfate](n) + 3'-phosphoadenylyl sulfate = 3-sulfo-alpha-D-glucosaminyl-[heparan sulfate](n) + adenosine 3',5'-bisphosphate + H(+). In terms of biological role, sulfotransferase that utilizes 3'-phospho-5'-adenylyl sulfate (PAPS) to catalyze the transfer of a sulfo group to position 3 of glucosamine residues in heparan. Catalyzes the rate limiting step in the biosynthesis of heparan sulfate (HSact). This modification is a crucial step in the biosynthesis of anticoagulant heparan sulfate as it completes the structure of the antithrombin pentasaccharide binding site. Also generates GlcUA-GlcNS or IdoUA-GlcNS and IdoUA2S-GlcNH2. The substrate-specific O-sulfation generates an enzyme-modified heparan sulfate which acts as a binding receptor to Herpes simplex virus-1 (HSV-1) and permits its entry. The protein is Heparan sulfate glucosamine 3-O-sulfotransferase 5 (HS3ST5) of Homo sapiens (Human).